The primary structure comprises 82 residues: ATP synthase subunit c (82 aa).

The next 2 helical transmembrane spans lie at 5 to 25 and 57 to 77; these read IASA…IGPG and LAFM…LLFA.

It belongs to the ATPase C chain family. In terms of assembly, F-type ATPases have 2 components, F(1) - the catalytic core - and F(0) - the membrane proton channel. F(1) has five subunits: alpha(3), beta(3), gamma(1), delta(1), epsilon(1). F(0) has four main subunits: a(1), b(1), b'(1) and c(10-14). The alpha and beta chains form an alternating ring which encloses part of the gamma chain. F(1) is attached to F(0) by a central stalk formed by the gamma and epsilon chains, while a peripheral stalk is formed by the delta, b and b' chains.

The protein resides in the cellular thylakoid membrane. Its function is as follows. F(1)F(0) ATP synthase produces ATP from ADP in the presence of a proton or sodium gradient. F-type ATPases consist of two structural domains, F(1) containing the extramembraneous catalytic core and F(0) containing the membrane proton channel, linked together by a central stalk and a peripheral stalk. During catalysis, ATP synthesis in the catalytic domain of F(1) is coupled via a rotary mechanism of the central stalk subunits to proton translocation. Key component of the F(0) channel; it plays a direct role in translocation across the membrane. A homomeric c-ring of between 10-14 subunits forms the central stalk rotor element with the F(1) delta and epsilon subunits. The protein is ATP synthase subunit c of Cyanothece sp. (strain PCC 7425 / ATCC 29141).